The sequence spans 539 residues: Glucose-6-phosphate isomerase (539 aa).

The Proton donor role is filled by E340. Residues H371 and K500 contribute to the active site.

The protein belongs to the GPI family.

The protein localises to the cytoplasm. It catalyses the reaction alpha-D-glucose 6-phosphate = beta-D-fructose 6-phosphate. It functions in the pathway carbohydrate biosynthesis; gluconeogenesis. The protein operates within carbohydrate degradation; glycolysis; D-glyceraldehyde 3-phosphate and glycerone phosphate from D-glucose: step 2/4. Functionally, catalyzes the reversible isomerization of glucose-6-phosphate to fructose-6-phosphate. This is Glucose-6-phosphate isomerase from Ruegeria pomeroyi (strain ATCC 700808 / DSM 15171 / DSS-3) (Silicibacter pomeroyi).